Reading from the N-terminus, the 510-residue chain is Peroxidase 2 (510 aa).

The first 19 residues, 1 to 19, serve as a signal peptide directing secretion; the sequence is MRLTYLPLFAGIAIQSASA. The propeptide occupies 20-58; sequence LPDFFKSSVLKPRRTNSLLINPDAQPDLPTAQQASTAAA. Catalysis depends on D228, which acts as the Proton acceptor. H362 is a binding site for heme.

As to quaternary structure, homodimer. The cofactor is heme b.

Peroxidase capable of degrading beta-carotene. The sequence is that of Peroxidase 2 from Mycetinis scorodonius (Garlic mushroom).